The sequence spans 490 residues: Homoserine O-acetyltransferase (490 aa).

One can recognise an AB hydrolase-1 domain in the interval 47–355 (NAILVCHALT…DYGHDAFLLE (309 aa)). Ser152 serves as the catalytic Nucleophile. Arg222 contributes to the substrate binding site. Residues Asp316 and His349 contribute to the active site. Asp350 contacts substrate. CBS domains lie at 376 to 436 (MKTD…LEDV) and 437 to 490 (MTKD…ISSY).

Belongs to the AB hydrolase superfamily. MetX family. As to quaternary structure, homodimer.

The protein resides in the cytoplasm. It carries out the reaction L-homoserine + acetyl-CoA = O-acetyl-L-homoserine + CoA. It participates in amino-acid biosynthesis; L-methionine biosynthesis via de novo pathway; O-acetyl-L-homoserine from L-homoserine: step 1/1. Its function is as follows. Transfers an acetyl group from acetyl-CoA to L-homoserine, forming acetyl-L-homoserine. This is Homoserine O-acetyltransferase from Methanobrevibacter ruminantium (strain ATCC 35063 / DSM 1093 / JCM 13430 / OCM 146 / M1) (Methanobacterium ruminantium).